A 457-amino-acid chain; its full sequence is RuvB-like helicase 1 (457 aa).

ATP is bound at residue 73-80 (GGPSTGKT).

It belongs to the RuvB family. May form heterododecamers with RVB2. Component of the SWR1 chromatin remodeling complex, the INO80 chromatin remodeling complex, and of the R2TP complex.

The protein localises to the nucleus. It carries out the reaction ATP + H2O = ADP + phosphate + H(+). DNA helicase which participates in several chromatin remodeling complexes, including the SWR1 and the INO80 complexes. The SWR1 complex mediates the ATP-dependent exchange of histone H2A for the H2A variant HZT1 leading to transcriptional regulation of selected genes by chromatin remodeling. The INO80 complex remodels chromatin by shifting nucleosomes and is involved in DNA repair. Also involved in pre-rRNA processing. The sequence is that of RuvB-like helicase 1 (RVB1) from Kluyveromyces lactis (strain ATCC 8585 / CBS 2359 / DSM 70799 / NBRC 1267 / NRRL Y-1140 / WM37) (Yeast).